The sequence spans 319 residues: Methionyl-tRNA formyltransferase (319 aa).

Position 113–116 (113–116 (SLLP)) interacts with (6S)-5,6,7,8-tetrahydrofolate.

This sequence belongs to the Fmt family.

The enzyme catalyses L-methionyl-tRNA(fMet) + (6R)-10-formyltetrahydrofolate = N-formyl-L-methionyl-tRNA(fMet) + (6S)-5,6,7,8-tetrahydrofolate + H(+). Attaches a formyl group to the free amino group of methionyl-tRNA(fMet). The formyl group appears to play a dual role in the initiator identity of N-formylmethionyl-tRNA by promoting its recognition by IF2 and preventing the misappropriation of this tRNA by the elongation apparatus. The protein is Methionyl-tRNA formyltransferase of Hamiltonella defensa subsp. Acyrthosiphon pisum (strain 5AT).